The chain runs to 21 residues: Cyanophlyctin (21 aa).

As to expression, expressed by the skin glands.

It is found in the secreted. In terms of biological role, has antibacterial activity against E.coli HP101BA (MIC=6.4 uM), K.pneumoniae PTCC1388 (MIC=7.3 uM), M.luteus PTCC1625 (MIC=4.7 uM) and S.aureus PTCC1431 (MIC=5.3 uM). Has no or very limited (&lt;3%) hemolytic activity at concentrations of 15 ug/ml and 60 ug/ml, respectively. The protein is Cyanophlyctin of Euphlyctis cyanophlyctis (Skittering frog).